A 211-amino-acid polypeptide reads, in one-letter code: UPF0502 protein PC1_1804 (211 aa).

Residues 168-188 are disordered; sequence SGDASDAAPEEEGAGDNSHQL.

It belongs to the UPF0502 family.

The chain is UPF0502 protein PC1_1804 from Pectobacterium carotovorum subsp. carotovorum (strain PC1).